The sequence spans 181 residues: Translationally-controlled tumor protein homolog (181 aa).

The TCTP domain occupies 1–181; that stretch reads MLIFKDAFTD…VKEALVEEKQ (181 aa).

Belongs to the TCTP family.

It localises to the cytoplasm. In terms of biological role, involved in calcium binding and microtubule stabilization. The sequence is that of Translationally-controlled tumor protein homolog from Wuchereria bancrofti.